The primary structure comprises 271 residues: Acyl-[acyl-carrier-protein]--UDP-N-acetylglucosamine O-acyltransferase (271 aa).

Belongs to the transferase hexapeptide repeat family. LpxA subfamily. As to quaternary structure, homotrimer.

The protein localises to the cytoplasm. It catalyses the reaction a (3R)-hydroxyacyl-[ACP] + UDP-N-acetyl-alpha-D-glucosamine = a UDP-3-O-[(3R)-3-hydroxyacyl]-N-acetyl-alpha-D-glucosamine + holo-[ACP]. It functions in the pathway glycolipid biosynthesis; lipid IV(A) biosynthesis; lipid IV(A) from (3R)-3-hydroxytetradecanoyl-[acyl-carrier-protein] and UDP-N-acetyl-alpha-D-glucosamine: step 1/6. Involved in the biosynthesis of lipid A, a phosphorylated glycolipid that anchors the lipopolysaccharide to the outer membrane of the cell. This is Acyl-[acyl-carrier-protein]--UDP-N-acetylglucosamine O-acyltransferase from Sulfurihydrogenibium sp. (strain YO3AOP1).